The chain runs to 529 residues: T-complex protein 1 subunit delta (529 aa).

This sequence belongs to the TCP-1 chaperonin family. As to quaternary structure, heterooligomeric complex of about 850 to 900 kDa that forms two stacked rings, 12 to 16 nm in diameter.

Its subcellular location is the cytoplasm. In terms of biological role, molecular chaperone; assists the folding of proteins upon ATP hydrolysis. Known to play a role, in vitro, in the folding of actin and tubulin. This is T-complex protein 1 subunit delta (CCT4) from Eremothecium gossypii (strain ATCC 10895 / CBS 109.51 / FGSC 9923 / NRRL Y-1056) (Yeast).